We begin with the raw amino-acid sequence, 715 residues long: Palmitoyltransferase ZDHHC5 (715 aa).

Topologically, residues Met-1–Lys-13 are cytoplasmic. A helical transmembrane segment spans residues Tyr-14 to Phe-34. At Thr-35–Ala-52 the chain is on the extracellular side. The chain crosses the membrane as a helical span at residues Ile-53–Phe-73. Topologically, residues Pro-74–Tyr-148 are cytoplasmic. Tyr-91 is subject to Phosphotyrosine. Residues Lys-104–Leu-154 form the DHHC domain. Catalysis depends on Cys-134, which acts as the S-palmitoyl cysteine intermediate. The chain crosses the membrane as a helical span at residues Phe-149–Leu-169. Topologically, residues Tyr-170–Cys-191 are extracellular. A helical transmembrane segment spans residues Val-192–Ala-212. Residues Arg-213 to Val-715 lie on the Cytoplasmic side of the membrane. The residue at position 247 (Ser-247) is a Phosphoserine. The tract at residues Gly-289 to Val-715 is disordered. Phosphothreonine is present on Thr-294. Ser-296 and Ser-299 each carry phosphoserine. The residue at position 303 (Thr-303) is a Phosphothreonine. A Phosphoserine modification is found at Ser-345. 2 positions are modified to phosphothreonine: Thr-348 and Thr-350. Low complexity predominate over residues Ser-359 to Ala-373. Residues Ser-380, Ser-398, Ser-406, and Ser-409 each carry the phosphoserine modification. The residue at position 411 (Thr-411) is a Phosphothreonine. Phosphoserine occurs at positions 415, 425, 429, and 432. Residues Ser-422 to Ser-432 show a composition bias toward low complexity. At Thr-436 the chain carries Phosphothreonine. The span at Gln-442–Asp-478 shows a compositional bias: polar residues. Residues Ser-529 and Ser-554 each carry the phosphoserine modification. Positions Pro-581–Lys-597 are enriched in low complexity. Arg-617 carries the post-translational modification Omega-N-methylarginine. At Ser-621 the chain carries Phosphoserine. Thr-659 bears the Phosphothreonine mark. Residues Leu-666–Pro-677 show a composition bias toward polar residues. Residues Ser-684 and Ser-694 each carry the phosphoserine modification. Residue Arg-697 is modified to Omega-N-methylarginine.

This sequence belongs to the DHHC palmitoyltransferase family. ERF2/ZDHHC9 subfamily. Phosphorylation regulates association with endocytic proteins and its subcellular localization. Phosphorylation by LYN during fatty acid uptake leads to inactivation of the activity. Post-translationally, autopalmitoylated. Palmitoylation of the C-terminal tail regulates stimulation-dependent plasma membrane motility. In terms of tissue distribution, highly enriched in brain, detectable in liver and heart, and undetectable in most other tissues.

Its subcellular location is the cell membrane. The catalysed reaction is L-cysteinyl-[protein] + hexadecanoyl-CoA = S-hexadecanoyl-L-cysteinyl-[protein] + CoA. Its function is as follows. Palmitoyltransferase that catalyzes the addition of palmitate onto various protein substrates such as CTNND2, CD36, GSDMD, NLRP3, NOD1, NOD2, STAT3 and S1PR1 thus plays a role in various biological processes including cell adhesion, inflammation, fatty acid uptake, bacterial sensing or cardiac functions. Plays an important role in the regulation of synapse efficacy by mediating palmitoylation of delta-catenin/CTNND2, thereby increasing synaptic delivery and surface stabilization of alpha-amino-3-hydroxy-5-methyl-4-isoxazole propionic acid receptors (AMPARs). Under basal conditions, remains at the synaptic membrane through FYN-mediated phosphorylation that prevents association with endocytic proteins. Neuronal activity enhances the internalization and trafficking of DHHC5 from spines to dendritic shafts where it palmitoylates delta-catenin/CTNND2. Regulates cell adhesion at the plasma membrane by palmitoylating GOLGA7B and DSG2. Plays a role in innate immune response by mediating the palmitoylation of NOD1 and NOD2 and their proper recruitment to the bacterial entry site and phagosomes. Also participates in fatty acid uptake by palmitoylating CD36 and thereby targeting it to the plasma membrane. Upon binding of fatty acids to CD36, gets phosphorylated by LYN leading to inactivation and subsequent CD36 caveolar endocytosis. Controls oligodendrocyte development by catalyzing STAT3 palmitoylation. Acts as a regulator of inflammatory response by mediating palmitoylation of NLRP3 and GSDMD. Palmitoylates NLRP3 to promote inflammasome assembly and activation. Activates pyroptosis by catalyzing palmitoylation of gasdermin-D (GSDMD), thereby promoting membrane translocation and pore formation of GSDMD. In Mus musculus (Mouse), this protein is Palmitoyltransferase ZDHHC5 (Zdhhc5).